Reading from the N-terminus, the 346-residue chain is MSDNQDLRIAVLGVGIMGADHVDRITNKIGGARVTVVNDYSLARAEEIAALTPGSRVVVDPFDAIAAEDVDAVVLATPGPTHEKQVLACLEAGKPVLCEKPLTTDADSSLAIVKAEAALGKKLIQVGFMRRFDHEYTQLKYLIDSGDLGRPLVVHCAHRNPAVPNGFDSAMIVKDSLVHEVDVTRFLLDEEITSVQIIRPSANSLAPEGIQDPQIAIFETESGRHVDAEVFVTTGVAYEVRTEVVGELGSAMIGLDVGLIRKTKPGNWGGQITPGFRERFGQAYDTEFARWIKAVKTGAGTGNYIDGPGAWDGYAAAAVCAAGVKSLETGQRVVVDMVARDSVAGA.

The protein belongs to the Gfo/Idh/MocA family. As to quaternary structure, homotetramer.

It carries out the reaction myo-inositol + NAD(+) = scyllo-inosose + NADH + H(+). Its function is as follows. Involved in the oxidation of myo-inositol (MI) to 2-keto-myo-inositol (2KMI or 2-inosose). The sequence is that of Inositol 2-dehydrogenase from Rhodococcus erythropolis (strain PR4 / NBRC 100887).